Reading from the N-terminus, the 479-residue chain is Ribosomal RNA small subunit methyltransferase F (479 aa).

Residues 125 to 131, Glu-149, Asp-176, and Asp-194 each bind S-adenosyl-L-methionine; that span reads AAAPGSK. Cys-247 serves as the catalytic Nucleophile.

Belongs to the class I-like SAM-binding methyltransferase superfamily. RsmB/NOP family.

The protein resides in the cytoplasm. It catalyses the reaction cytidine(1407) in 16S rRNA + S-adenosyl-L-methionine = 5-methylcytidine(1407) in 16S rRNA + S-adenosyl-L-homocysteine + H(+). Its function is as follows. Specifically methylates the cytosine at position 1407 (m5C1407) of 16S rRNA. The sequence is that of Ribosomal RNA small subunit methyltransferase F from Escherichia coli O7:K1 (strain IAI39 / ExPEC).